Here is a 359-residue protein sequence, read N- to C-terminus: Spore germination protein GerQC (359 aa).

The first 16 residues, 1-16 (MKRWILFLILSVFLIG), serve as a signal peptide directing secretion. Residue Cys-17 is the site of N-palmitoyl cysteine attachment. A lipid anchor (S-diacylglycerol cysteine) is attached at Cys-17.

It belongs to the GerABKC lipoprotein family.

The protein resides in the membrane. Required for the germination response to inosine. Has no role in L-alanine germination. The sequence is that of Spore germination protein GerQC (gerQC) from Bacillus cereus.